We begin with the raw amino-acid sequence, 106 residues long: Large ribosomal subunit protein eL42 (106 aa).

A disordered region spans residues 36–56; sequence FAQGKRRYDRKQSGYGGQTKP.

Belongs to the eukaryotic ribosomal protein eL42 family.

The protein is Large ribosomal subunit protein eL42 (RPL44) of Phaffia rhodozyma (Yeast).